The primary structure comprises 120 residues: Small ribosomal subunit protein eS24 (120 aa).

The interval arginine 101–glycine 120 is disordered.

It belongs to the eukaryotic ribosomal protein eS24 family.

The protein is Small ribosomal subunit protein eS24 of Saccharolobus solfataricus (strain ATCC 35092 / DSM 1617 / JCM 11322 / P2) (Sulfolobus solfataricus).